The primary structure comprises 1155 residues: Protein BREAST CANCER SUSCEPTIBILITY 2 homolog B (1155 aa).

BRCA2 repeat units follow at residues 63-97 (MPGE…ENVA), 116-150 (TAET…SDMI), 163-197 (FGVP…LEED), and 257-291 (LKVP…DPEL).

Interacts with RAD51 and DMC1. Interacts with DSS1(I) and DSS1(V). Can interact with both RAD51 and DSS1(I) or both DMC1 and DSS1(I) in a tripartite complex. In terms of tissue distribution, expressed in flower buds.

Its function is as follows. Involved in double-strand break repair and/or homologous recombination by mediating RAD51- and DMC1-facilitated DNA repair. Plays an essential role in both somatic and meiotic homologous recombination. Is crucial for the formation of RAD51 and DMC1 foci during male meiotic homologous recombination in prophase I. This chain is Protein BREAST CANCER SUSCEPTIBILITY 2 homolog B, found in Arabidopsis thaliana (Mouse-ear cress).